Consider the following 799-residue polypeptide: MDFVDFDSFSNDEITGEDNLPHPQPALSLPITSNIETIGKRISSLNTITRSLLKFEGTDEEEGESSSENASKENELAQKYAQMSLNFLKKEETQHGSDGKIANGVDGKSYNDFEHSKATLSTRLSRVLNDSLSETLLREIFSHLEDKYSSYDDSIDELIEPGVVGSMSRKKLRGKVENELIKNQSLVLKEYQPVIKQLKVVEDRLSKLNDLNKVTNDNIENKFKYSSEFNTKVKELNSEKRLINLKKNLLINFKAKFTLNEYEEFVLDSGDINDEFFTVLKKAEEINANCSILLSIENPQLGLKIMSKSNHLINRSVERIINFTNKTLSNLYSLNSKARLRTLHQCMRYLKNKLNYFSNVVNTFVDSRAKVLVDDFLSQIQGNLDSNGNVSTFKRRSSSISSETSSRPIYVSAHDPIRFIGDLLAYVHSLVVNESDTIISIFTFETSESEVEKKEFETIIKDIIDKILKSLVKPVKSKVTQIISAETKLSTSYSIFNLVELYSMMFTKQLSDTSEVSIALKSLVKASQDRLASIISNRLASIRTSNSAQLELNLDLQPPEWIIEFYSDLLPILDQTTTDTIFNFTAEENEEFMKLLVDEPIEIFFEHIGSNKIFESKKDQLILKHNFLDLILSKLLPITIVSDKVIEINEMINTLTQELTQLQLEAILKECGLYDYYNIVNMICPFSDDFFDTSIYEPIKENQLYNKSELLKINEIIQSYIPNALLDIQSSLLKLNPPSIVNEVTTNASLEFVKYYGKLSQINSAFLQETFTWSDFEIATLLGVDEDYTEFIKLVANSG.

This sequence belongs to the COG6 family.

The protein localises to the golgi apparatus membrane. In terms of biological role, acts as a component of the peripheral membrane COG complex that is involved in intra-Golgi protein trafficking. COG is located at the cis-Golgi, and regulates tethering of retrograde intra-Golgi vesicles and possibly a number of other membrane trafficking events. This is Conserved oligomeric Golgi complex subunit 6 (COG6) from Scheffersomyces stipitis (strain ATCC 58785 / CBS 6054 / NBRC 10063 / NRRL Y-11545) (Yeast).